A 426-amino-acid polypeptide reads, in one-letter code: MESLTLQPINLINGEVNLPGSKSVSNRALLLAALAQGTTRLTNLLDSDDIRHMLNALQQLGVQYQLSADKTECTVEGLGQPFSVKDFTCLYLGNAGTAMRPLAAALCLGQGEFELTGEPRMKERPIGHLVDALRSAGADITYLENEHYPPLKIKGTGLDGGEVSIDGSISSQFLTAFLMAAPLAKSDTTILIKGDLVSKPYIDITLNIMAQFGVQVENQNYQKFIVPAGQVYQSPGEFLVEGDASSASYFLAAGAIKGGEVKVTGIGKNSIQGDIQFADALEAMGAEIEWGEDYIIARHRQLNAIDMDFNHIPDAAMTIATAALFAPGTTSIRNVYNWRVKETDRLHAMATELRKLGAEVEEGDDYITITSPTQLKHVAIDTYDDHRMAMCFSLVALSDTAVTINDPKCTSKTFPDYFTKLEQLSR.

3 residues coordinate 3-phosphoshikimate: Lys-22, Ser-23, and Arg-27. Lys-22 lines the phosphoenolpyruvate pocket. Phosphoenolpyruvate is bound by residues Gly-96 and Arg-124. 3-phosphoshikimate is bound by residues Ser-170, Ser-171, Gln-172, Ser-198, Asp-314, Asn-337, and Lys-341. Residue Gln-172 coordinates phosphoenolpyruvate. Asp-314 functions as the Proton acceptor in the catalytic mechanism. 3 residues coordinate phosphoenolpyruvate: Arg-345, Arg-387, and Lys-412.

Belongs to the EPSP synthase family. As to quaternary structure, monomer.

The protein localises to the cytoplasm. The catalysed reaction is 3-phosphoshikimate + phosphoenolpyruvate = 5-O-(1-carboxyvinyl)-3-phosphoshikimate + phosphate. It functions in the pathway metabolic intermediate biosynthesis; chorismate biosynthesis; chorismate from D-erythrose 4-phosphate and phosphoenolpyruvate: step 6/7. Catalyzes the transfer of the enolpyruvyl moiety of phosphoenolpyruvate (PEP) to the 5-hydroxyl of shikimate-3-phosphate (S3P) to produce enolpyruvyl shikimate-3-phosphate and inorganic phosphate. The sequence is that of 3-phosphoshikimate 1-carboxyvinyltransferase from Photobacterium damsela subsp. piscicida (Pasteurella piscicida).